The following is an 86-amino-acid chain: RNA-binding protein Hfq (86 aa).

The Sm domain occupies 9 to 68 (DPYLNVLRKERIPVSIYLVNGIKLQGQVESFDQFVVLLKNTVSQMVYKHAISTVVPSRPV).

The protein belongs to the Hfq family. Homohexamer.

In terms of biological role, RNA chaperone that binds small regulatory RNA (sRNAs) and mRNAs to facilitate mRNA translational regulation in response to envelope stress, environmental stress and changes in metabolite concentrations. Also binds with high specificity to tRNAs. This is RNA-binding protein Hfq from Saccharophagus degradans (strain 2-40 / ATCC 43961 / DSM 17024).